The sequence spans 680 residues: Chaperone protein dnaK3 (680 aa).

The residue at position 205 (threonine 205) is a Phosphothreonine; by autocatalysis. The disordered stretch occupies residues 640–680 (GRERRRDDDEDEWAEPPRTRRSRSYSQRADSAPWDDWDDDW).

This sequence belongs to the heat shock protein 70 family.

Functionally, acts as a chaperone. In Thermosynechococcus vestitus (strain NIES-2133 / IAM M-273 / BP-1), this protein is Chaperone protein dnaK3 (dnaK3).